The following is a 431-amino-acid chain: Ammonium transporter 3 (431 aa).

Residues 1 to 27 (MEQFSTSSSESSDSSSEYSLEFYMDTS) lie on the Extracellular side of the membrane. The helical transmembrane segment at 28 to 48 (WVLDAANLVFFMQAGFGMLEA) threads the bilayer. The Cytoplasmic portion of the chain corresponds to 49-63 (GMVRAKNTKSILLKN). The helical transmembrane segment at 64–84 (LINTAICAISYYCVGHSFAYG) threads the bilayer. Over 85 to 102 (KVNPNSFVGFGNFFLMDY) the chain is Extracellular. Residues 103-125 (THYAYWMIQWAYAATATTIATGA) traverse the membrane as a helical segment. The Cytoplasmic segment spans residues 126–134 (MAERLQLHC). The chain crosses the membrane as a helical span at residues 135–155 (YILFTLVQTILIYPFVAHWIW). Residues 156 to 160 (SQNGW) lie on the Extracellular side of the membrane. The helical transmembrane segment at 161–181 (LFDLGIVDFAGGAVIHIVAGI) threads the bilayer. The Cytoplasmic portion of the chain corresponds to 182–211 (TGACGSFLLGPRIGRFNQESGKPKNLPGHS). A helical transmembrane segment spans residues 212–232 (VVLMSLGAMILWYSWYGYTAG). The Extracellular portion of the chain corresponds to 233-249 (ASLGMTRSRVLPASRVS). The helical transmembrane segment at 250-270 (VVVTLSGATGLITVLGIGKIF) threads the bilayer. At 271–300 (NGHYDLVKGINGLIAGLVSSTSSCAYIEPW) the chain is on the cytoplasmic side. The helical transmembrane segment at 301-321 (AAIIIGFIGGIVYWFSSWALL) threads the bilayer. Topologically, residues 322 to 333 (NWLRLDDPVDST) are extracellular. Residues 334–354 (AIHLFGGCWSLISVAFFATHG) form a helical membrane-spanning segment. Residues 355 to 357 (RVR) lie on the Cytoplasmic side of the membrane. The helical transmembrane segment at 358 to 378 (NPDIILPGGIFYGGGISLLWV) threads the bilayer. Residue Gln-379 is a topological domain, extracellular. The chain crosses the membrane as a helical span at residues 380–400 (LVGMVLAILWAGFLSGIFFFT). Topologically, residues 401 to 431 (MDYFGKLRVDVDTELAGLDNSNHGGSAYIFD) are cytoplasmic.

It belongs to the ammonia transporter channel (TC 1.A.11.2) family.

It localises to the cell membrane. Its subcellular location is the endosome membrane. The protein resides in the cytoplasmic vesicle. It is found in the phagosome membrane. Its function is as follows. Ammonium transporter that mediates the import of ammonium in prespore cells. Controls ammonium homeostasis during growth and development. Ammonium has been shown to function as a morphogen at multiple steps during the development. May function as an ammonia sensor that relays information concerning ammonia concentrations to the signaling pathway involved in the slug versus culmination choice and regulates prestalk gene expression. In Dictyostelium discoideum (Social amoeba), this protein is Ammonium transporter 3 (amtC).